The sequence spans 483 residues: Protein FIZZY-RELATED 2 (483 aa).

A disordered region spans residues 1-28 (MEEEDPTASNVITNSNSSSMRNLSPAMN). Polar residues predominate over residues 7-28 (TASNVITNSNSSSMRNLSPAMN). 7 WD repeats span residues 174 to 211 (QDDF…VTKL), 215 to 254 (GAED…RTRT), 257 to 294 (GHRL…DHVS), 298 to 337 (GHKS…PVLK), 340 to 382 (EHTA…HLSS), 384 to 425 (DTCS…KIAT), and 428 to 467 (GHTY…KSQN).

It belongs to the WD repeat CDC20/Fizzy family. As to quaternary structure, associates with the APC/C complex. Interacts with CDC20-1, CDC20-2, CYCA1-1, CYCA1-2, CYCA3-4, CYCB1-1 and CYCB1-2. Binds to GIG1 and PYM. In terms of tissue distribution, expressed in seedlings, flowers, leaves and roots. Expressed in the differentiating cell files of the root elongation zone.

Its subcellular location is the nucleus. Its pathway is protein modification; protein ubiquitination. Functionally, activator protein that regulates the ubiquitin ligase activity and substrate specificity of the anaphase promoting complex/cyclosome (APC/C). Necessary and sufficient for endoreduplication and correct cell expansion. Controls meristem size by stimulating endoreduplication in the elongation zone. This is Protein FIZZY-RELATED 2 (FZR2) from Arabidopsis thaliana (Mouse-ear cress).